The sequence spans 499 residues: Probable lipid II flippase MurJ (499 aa).

14 consecutive transmembrane segments (helical) span residues 4–24 (LFRA…FGYV), 26–46 (DATV…FIAF), 88–108 (LLIT…EEII), 130–150 (FTIL…ILLV), 154–174 (FFVP…SLVI), 184–204 (LALA…FLLF), 227–247 (FLFT…DTFL), 265–285 (IYLL…LALV), 297–317 (TALK…FFLS), 335–355 (LFYT…YSLQ), 375–395 (AFLS…LLNF), 396–416 (GVYS…VYLY), 425–445 (IPFG…GLVY), and 455–475 (FILV…LIIL).

It belongs to the MurJ/MviN family.

The protein localises to the cell inner membrane. It participates in cell wall biogenesis; peptidoglycan biosynthesis. Its function is as follows. Involved in peptidoglycan biosynthesis. Transports lipid-linked peptidoglycan precursors from the inner to the outer leaflet of the cytoplasmic membrane. The chain is Probable lipid II flippase MurJ from Aquifex aeolicus (strain VF5).